The following is a 446-amino-acid chain: NADH-dependent phenylglyoxylate dehydrogenase subunit beta (446 aa).

4 consecutive 4Fe-4S ferredoxin-type domains span residues Ser-6–Ile-35, Ala-49–Thr-80, Gly-82–Ala-111, and Asp-109–Thr-141.

Dimer of heteropentamers composed of an alpha (PadG), a beta (PadI), a gamma (PadE), a delta (PadF) and an epsilon (PadH) subunit. [4Fe-4S] cluster serves as cofactor.

The enzyme catalyses phenylglyoxylate + NAD(+) + CoA = benzoyl-CoA + CO2 + NADH. Activated by magnesium ions and thiamine diphosphate. Functionally, involved in the anaerobic metabolism of phenylalanine and phenylacetate. Catalyzes the oxidative decarboxylation of phenylglyoxylate to benzoyl-CoA and CO(2). It can also react slowly with 2-oxo-3-methylbutanoate and use different electron acceptors such as benzyl viologen, methyl viologen, FAD or FMN, but NAD seems to be the physiological electron acceptor. Also catalyzes an isotope exchange between CO(2) and the carboxyl group which proves partial or complete reversibility of the oxidative decarboxylation reaction. The chain is NADH-dependent phenylglyoxylate dehydrogenase subunit beta (padI) from Aromatoleum evansii (Azoarcus evansii).